We begin with the raw amino-acid sequence, 281 residues long: Aliphatic sulfonates import ATP-binding protein SsuB (281 aa).

The region spanning 40 to 263 is the ABC transporter domain; sequence LDIRGLRKSF…QRGSAELAAL (224 aa). 72-79 serves as a coordination point for ATP; it reads GRSGCGKS.

This sequence belongs to the ABC transporter superfamily. Aliphatic sulfonates importer (TC 3.A.1.17.2) family. As to quaternary structure, the complex is composed of two ATP-binding proteins (SsuB), two transmembrane proteins (SsuC) and a solute-binding protein (SsuA).

The protein localises to the cell inner membrane. The catalysed reaction is ATP + H2O + aliphatic sulfonate-[sulfonate-binding protein]Side 1 = ADP + phosphate + aliphatic sulfonateSide 2 + [sulfonate-binding protein]Side 1.. In terms of biological role, part of the ABC transporter complex SsuABC involved in aliphatic sulfonates import. Responsible for energy coupling to the transport system. In Rhodopseudomonas palustris (strain ATCC BAA-98 / CGA009), this protein is Aliphatic sulfonates import ATP-binding protein SsuB.